A 391-amino-acid polypeptide reads, in one-letter code: Phosphoglycerate kinase (391 aa).

Residues 21 to 23 (DLN), arginine 36, 59 to 62 (HLGR), arginine 113, and arginine 146 contribute to the substrate site. Residues lysine 197, glutamate 319, and 345 to 348 (GGDT) each bind ATP.

Belongs to the phosphoglycerate kinase family. As to quaternary structure, monomer.

The protein resides in the cytoplasm. The enzyme catalyses (2R)-3-phosphoglycerate + ATP = (2R)-3-phospho-glyceroyl phosphate + ADP. The protein operates within carbohydrate degradation; glycolysis; pyruvate from D-glyceraldehyde 3-phosphate: step 2/5. This chain is Phosphoglycerate kinase, found in Pseudoalteromonas translucida (strain TAC 125).